The following is a 393-amino-acid chain: Stearoyl-[acyl-carrier-protein] 9-desaturase, chloroplastic (393 aa).

The N-terminal 30 residues, 1–30 (MALNFNSPTFQSIKTTRRPCSPLRSPRVFM), are a transit peptide targeting the chloroplast. Glutamate 135, glutamate 173, histidine 176, glutamate 226, glutamate 259, and histidine 262 together coordinate Fe cation.

The protein belongs to the fatty acid desaturase type 2 family. As to quaternary structure, homodimer. The cofactor is Fe(2+).

The protein localises to the plastid. It is found in the chloroplast. The catalysed reaction is octadecanoyl-[ACP] + 2 reduced [2Fe-2S]-[ferredoxin] + O2 + 2 H(+) = (9Z)-octadecenoyl-[ACP] + 2 oxidized [2Fe-2S]-[ferredoxin] + 2 H2O. It functions in the pathway lipid metabolism; fatty acid metabolism. Its function is as follows. Converts stearoyl-ACP to oleoyl-ACP by introduction of a cis double bond between carbons 9 and 10 of the acyl chain. In Solanum commersonii (Commerson's wild potato), this protein is Stearoyl-[acyl-carrier-protein] 9-desaturase, chloroplastic.